A 437-amino-acid chain; its full sequence is Selenocysteine lyase (437 aa).

M1 is subject to N-acetylmethionine. Positions 1-30 (MEAAGARNRDARSRAEKSPPESRKVYMDYN) are disordered. Basic and acidic residues predominate over residues 7-26 (RNRDARSRAEKSPPESRKVY). The residue at position 252 (K252) is an N6-(pyridoxal phosphate)lysine. C380 serves as the catalytic S-selanylcysteine intermediate.

It belongs to the class-V pyridoxal-phosphate-dependent aminotransferase family. As to quaternary structure, homodimer. Pyridoxal 5'-phosphate serves as cofactor.

The protein localises to the cytoplasm. The protein resides in the cytosol. It catalyses the reaction L-selenocysteine + AH2 = hydrogenselenide + L-alanine + A + H(+). Functionally, catalyzes the decomposition of L-selenocysteine to L-alanine and elemental selenium. This chain is Selenocysteine lyase (SCLY), found in Bos taurus (Bovine).